The chain runs to 260 residues: Vaa serine proteinase homolog 1 (260 aa).

An N-terminal signal peptide occupies residues 1–18 (MVLIRVLANLLVLQLSYA). The propeptide occupies 19–24 (QKSSEL). The Peptidase S1 domain maps to 25–251 (VIGGDECNIN…YTDWIQSIIA (227 aa)). Disulfide bonds link Cys31–Cys165, Cys52–Cys68, Cys100–Cys258, Cys144–Cys212, Cys176–Cys191, and Cys202–Cys227. An N-linked (GlcNAc...) asparagine glycan is attached at Asn123. The key residues for binding to FVIIIa stretch occupies residues 172-186 (DYSVCQKVYRKLPEK). Asn253 carries an N-linked (GlcNAc...) asparagine glycan.

It belongs to the peptidase S1 family. Snake venom subfamily. In terms of processing, N-glycosylated. The toxin exists in multiple glycoforms. In terms of tissue distribution, expressed by the venom gland.

Its subcellular location is the secreted. This is the first member of the serine protease family that has strong anticoagulant activity and lacks enzymatic activity. It inhibits activities of three blood coagulation complexes: (1) prothrombinase complex (composed of blood coagulation factors Va and Xa (F5 and F10)) (IC(50)=164.1 nM), (2) intrinsic tenase complex (composed of factors VIIIa and IXa (F8 and F9)), and (3) extrinsic tenase complex (composed of tissue factor and factor VIIa (F7)). The toxin also has been observed to bind prothrombin, factor FVa, non-activated and activated forms of factors FVII (F7) (FVII and FVIIa), factor FVIIIa (F8), factors FIX and FIXa (F9) and factors FX and FXa (F10). The toxin inhibits the activity of the intrinsic tenase complex mainly by competing with FIXa (F9) for binding to FVIIIa (F8). The polypeptide is Vaa serine proteinase homolog 1 (Vipera ammodytes ammodytes (Western sand viper)).